Here is a 458-residue protein sequence, read N- to C-terminus: MAHEKLWGGRFSEPTDQFVEEFTASIDFDKRLYHQDIRGSIAHARMLGKQGILPMAEVEKIVAGLQEVLARIEAGKFDFSVALEDIHMNIEARLTEKIGEAGKRLHTGRSRNDQVALDIRLYLRDEIVEISAYLDMLVDSLIYQAEANLGVIMPGYTHLQTAQPILFSHHMMAYVEMFTRDKGRMEDCLRRMNVLPLGAGALAGTTFPIDREHVAELLDFPGVTRNSLDSVSDRDFALEFMGASSILMMHLSRFSEELILWSTSEFKFVELTDSFCTGSSIMPQKKNPDVPELVRGKTGRVYGNLMALLTVMKALPLAYNKDMQEDKEPLFDTIDTVKGSLKIFADMVREMRINAGNMRAAAAKGFSTATDVADYLVRQGMPFRDAHEVVGKTVAYCIANGKDLPDLTMDEWQGFSDKIGEDIFDAITLEASVNARVATGGTALERVKAEIERAKVGR.

The protein belongs to the lyase 1 family. Argininosuccinate lyase subfamily.

It localises to the cytoplasm. It carries out the reaction 2-(N(omega)-L-arginino)succinate = fumarate + L-arginine. Its pathway is amino-acid biosynthesis; L-arginine biosynthesis; L-arginine from L-ornithine and carbamoyl phosphate: step 3/3. This Geobacter sulfurreducens (strain ATCC 51573 / DSM 12127 / PCA) protein is Argininosuccinate lyase.